Reading from the N-terminus, the 99-residue chain is DNA-directed RNA polymerase subunit omega (99 aa).

It belongs to the RNA polymerase subunit omega family. The RNAP catalytic core consists of 2 alpha, 1 beta, 1 beta' and 1 omega subunit. When a sigma factor is associated with the core the holoenzyme is formed, which can initiate transcription.

It carries out the reaction RNA(n) + a ribonucleoside 5'-triphosphate = RNA(n+1) + diphosphate. Functionally, promotes RNA polymerase assembly. Latches the N- and C-terminal regions of the beta' subunit thereby facilitating its interaction with the beta and alpha subunits. The protein is DNA-directed RNA polymerase subunit omega of Thermus thermophilus (strain ATCC BAA-163 / DSM 7039 / HB27).